The following is a 735-amino-acid chain: 1,4-alpha-glucan branching enzyme GlgB (735 aa).

Asp-414 serves as the catalytic Nucleophile. Glu-469 functions as the Proton donor in the catalytic mechanism.

It belongs to the glycosyl hydrolase 13 family. GlgB subfamily. In terms of assembly, monomer.

It catalyses the reaction Transfers a segment of a (1-&gt;4)-alpha-D-glucan chain to a primary hydroxy group in a similar glucan chain.. It participates in glycan biosynthesis; glycogen biosynthesis. Its function is as follows. Catalyzes the formation of the alpha-1,6-glucosidic linkages in glycogen by scission of a 1,4-alpha-linked oligosaccharide from growing alpha-1,4-glucan chains and the subsequent attachment of the oligosaccharide to the alpha-1,6 position. The sequence is that of 1,4-alpha-glucan branching enzyme GlgB from Burkholderia lata (strain ATCC 17760 / DSM 23089 / LMG 22485 / NCIMB 9086 / R18194 / 383).